The chain runs to 214 residues: MSLLIEQARYHLSAHNARQLPDDGGYEVAFAGRSNAGKSSALNALTRQNALARVSKTPGRTQQLVFFQIQPERYLVDLPGYGYAKVPQDLQAHWQAFIDRYFRTREALRGLVVVMDIRHPLKDYDLQMLGYAAERGLPAHGLLTKADKLGRGQQMQTLQKVKKEVTSRFGDSVTVQTYSGESRQGVDELRGIVGGWLGLDGAPPAAEGEPGQAP.

In terms of domain architecture, EngB-type G spans 24-199 (GGYEVAFAGR…RGIVGGWLGL (176 aa)). GTP-binding positions include 32-39 (GRSNAGKS), 59-63 (GRTQQ), 77-80 (DLPG), 144-147 (TKAD), and 178-180 (YSG). The Mg(2+) site is built by serine 39 and threonine 61.

It belongs to the TRAFAC class TrmE-Era-EngA-EngB-Septin-like GTPase superfamily. EngB GTPase family. Mg(2+) is required as a cofactor.

Functionally, necessary for normal cell division and for the maintenance of normal septation. This Xanthomonas axonopodis pv. citri (strain 306) protein is Probable GTP-binding protein EngB.